A 406-amino-acid polypeptide reads, in one-letter code: NIPA-like protein 3 (406 aa).

The next 4 membrane-spanning stretches (helical) occupy residues 33–53, 76–96, 101–121, and 135–155; these read NLIG…ALNL, WWLG…SYAF, LIVP…IIFI, and VLSF…VTFA. The N-linked (GlcNAc...) asparagine glycan is linked to asparagine 166. Helical transmembrane passes span 171–191, 202–222, 240–260, 271–291, and 300–320; these read LVSW…CLLL, IVVI…TVKA, PIFY…AAFL, LIAS…GAIF, and VLHI…VFLI. Serine 372 carries the phosphoserine modification.

Belongs to the NIPA family.

The protein resides in the membrane. This chain is NIPA-like protein 3 (NIPAL3), found in Homo sapiens (Human).